Consider the following 444-residue polypeptide: Phosphoglucosamine mutase (444 aa).

Residue serine 102 is the Phosphoserine intermediate of the active site. 4 residues coordinate Mg(2+): serine 102, aspartate 241, aspartate 243, and aspartate 245. A Phosphoserine modification is found at serine 102.

Belongs to the phosphohexose mutase family. Mg(2+) serves as cofactor. Post-translationally, activated by phosphorylation.

The enzyme catalyses alpha-D-glucosamine 1-phosphate = D-glucosamine 6-phosphate. Catalyzes the conversion of glucosamine-6-phosphate to glucosamine-1-phosphate. This chain is Phosphoglucosamine mutase, found in Acidovorax ebreus (strain TPSY) (Diaphorobacter sp. (strain TPSY)).